The primary structure comprises 795 residues: Volume-regulated anion channel subunit LRRC8E (795 aa).

The Cytoplasmic segment spans residues 1–22 (MIPVAEFKQFTEQQPAFKVLKP). The helical transmembrane segment at 23–43 (WWDVLAEYLTVAMLMIGVFGC) threads the bilayer. Residues 44–116 (TLQVTQDKII…YETALHWYAK (73 aa)) are Extracellular-facing. A disulfide bridge links Cys-54 with Cys-300. Asn-63 carries an N-linked (GlcNAc...) asparagine glycan. Residues 117–137 (YFPYLVVIHTLIFMVCTSFWF) form a helical membrane-spanning segment. At 138–264 (KFPGTSSKIE…IRQTVLKVCK (127 aa)) the chain is on the cytoplasmic side. The helical transmembrane segment at 265 to 285 (FFAILVYNLIYVEKISFLVAC) threads the bilayer. Topologically, residues 286-312 (RVETSEITGYASFCCNHTKAHLFSKLA) are extracellular. An N-linked (GlcNAc...) asparagine glycan is attached at Asn-301. The chain crosses the membrane as a helical span at residues 313 to 333 (FCYISFVCVYGITCLYTLYWL). Topologically, residues 334-795 (FHRPLKEYSF…AEVREKMEEE (462 aa)) are cytoplasmic. LRR repeat units lie at residues 535 to 556 (QLKVLSLRSNAGKVPASVTDVA), 558 to 578 (HLQRLSLHNDGARLLALNSLK), 582 to 603 (VLRELELVACGLERIPHAIFSL), 605 to 626 (ALQELDLKDNHLRSIEEILSFQ), 630 to 651 (KLVTLRLWHNQIAYVPEHVRKL), 653 to 674 (SLEQLYLSHNKLETLPTQLGQC), 676 to 697 (GLRLLDLSHNGLRSLPPELGLL), 699 to 720 (SLQHLALSYNALESLPDELFFC), 722 to 744 (KLRTLLLGYNHLTQLSPDVAALQ), and 745 to 766 (ALSRLELKGNRLETLPEELGDC).

The protein belongs to the LRRC8 family. As to quaternary structure, heterohexamer; oligomerizes with other LRRC8 proteins (LRRC8A, LRRC8C, LRRC8D and/or LRRC8B) to form a heterohexamer. In vivo, the subunit composition may depend primarily on expression levels, and heterooligomeric channels containing various proportions of the different LRRC8 proteins may coexist.

The protein localises to the cell membrane. The protein resides in the endoplasmic reticulum membrane. It is found in the lysosome membrane. The catalysed reaction is chloride(in) = chloride(out). The enzyme catalyses iodide(out) = iodide(in). It carries out the reaction taurine(out) = taurine(in). It catalyses the reaction 2',3'-cGAMP(out) = 2',3'-cGAMP(in). Functionally, non-essential component of the volume-regulated anion channel (VRAC, also named VSOAC channel), an anion channel required to maintain a constant cell volume in response to extracellular or intracellular osmotic changes. The VRAC channel conducts iodide better than chloride and can also conduct organic osmolytes like taurine. Mediates efflux of amino acids, such as aspartate, in response to osmotic stress. The VRAC channel also mediates transport of immunoreactive cyclic dinucleotide GMP-AMP (2'-3'-cGAMP), an immune messenger produced in response to DNA virus in the cytosol. Channel activity requires LRRC8A plus at least one other family member (LRRC8B, LRRC8C, LRRC8D or LRRC8E); channel characteristics depend on the precise subunit composition. Also plays a role in lysosome homeostasis by forming functional lysosomal VRAC channels in response to low cytoplasmic ionic strength condition: lysosomal VRAC channels are necessary for the formation of large lysosome-derived vacuoles, which store and then expel excess water to maintain cytosolic water homeostasis. The sequence is that of Volume-regulated anion channel subunit LRRC8E from Mus musculus (Mouse).